The chain runs to 468 residues: Glutamate--tRNA ligase (468 aa).

The 'HIGH' region motif lies at 9 to 19 (PSPTGSIHIGN). The 'KMSKS' region motif lies at 239–243 (KLSKR). K242 is a binding site for ATP.

It belongs to the class-I aminoacyl-tRNA synthetase family. Glutamate--tRNA ligase type 1 subfamily. Monomer.

Its subcellular location is the cytoplasm. It catalyses the reaction tRNA(Glu) + L-glutamate + ATP = L-glutamyl-tRNA(Glu) + AMP + diphosphate. Functionally, catalyzes the attachment of glutamate to tRNA(Glu) in a two-step reaction: glutamate is first activated by ATP to form Glu-AMP and then transferred to the acceptor end of tRNA(Glu). The polypeptide is Glutamate--tRNA ligase (Blochmanniella pennsylvanica (strain BPEN)).